Consider the following 467-residue polypeptide: Probable receptor-like protein kinase At3g17420 (467 aa).

Residues 1-35 (MTSQLKRTLTKRYGVLELWEIIVIALFAAFIVILV) form the signal peptide. Over 36-123 (LSVWLSFRKK…LPPSTPSTTA (88 aa)) the chain is Extracellular. Asparagine 50 carries an N-linked (GlcNAc...) asparagine glycan. The residue at position 70 (serine 70) is a Phosphoserine. Residue asparagine 79 is glycosylated (N-linked (GlcNAc...) asparagine). Residues 102–126 (GSLEKKPLVGSHLPPSTPSTTAPSP) are disordered. A helical transmembrane segment spans residues 124–144 (PSPLLGLPEVSHIGWGHWFTL). Over 145–467 (RDLQLATNHF…DNDITTDAKI (323 aa)) the chain is Cytoplasmic. In terms of domain architecture, Protein kinase spans 154–433 (FSKESIIGDG…MLESDEYPVM (280 aa)). Residues 160–168 (IGDGGYGVV) and lysine 182 contribute to the ATP site. Residue tyrosine 227 is modified to Phosphotyrosine. Aspartate 280 serves as the catalytic Proton acceptor. 2 positions are modified to phosphoserine: serine 284 and serine 313. A phosphothreonine mark is found at threonine 314 and threonine 319. A Phosphotyrosine modification is found at tyrosine 327. Positions 413 to 467 (DKRPKMSQVARMLESDEYPVMPREERRRRRNQNAETHRESTDTNKDNDITTDAKI) are disordered. Positions 447-467 (ETHRESTDTNKDNDITTDAKI) are enriched in basic and acidic residues.

This sequence belongs to the protein kinase superfamily. Ser/Thr protein kinase family.

It is found in the cell membrane. The catalysed reaction is L-seryl-[protein] + ATP = O-phospho-L-seryl-[protein] + ADP + H(+). It catalyses the reaction L-threonyl-[protein] + ATP = O-phospho-L-threonyl-[protein] + ADP + H(+). This Arabidopsis thaliana (Mouse-ear cress) protein is Probable receptor-like protein kinase At3g17420.